Here is a 326-residue protein sequence, read N- to C-terminus: DNA-directed RNA polymerase subunit alpha (326 aa).

The alpha N-terminal domain (alpha-NTD) stretch occupies residues 1–230; sequence MLKIEKQAKA…LHLDPFLEIG (230 aa). The segment at 249–326 is alpha C-terminal domain (alpha-CTD); the sequence is DIQVIDDKSH…YDLEKNGSPE (78 aa).

This sequence belongs to the RNA polymerase alpha chain family. As to quaternary structure, homodimer. The RNAP catalytic core consists of 2 alpha, 1 beta, 1 beta' and 1 omega subunit. When a sigma factor is associated with the core the holoenzyme is formed, which can initiate transcription.

The catalysed reaction is RNA(n) + a ribonucleoside 5'-triphosphate = RNA(n+1) + diphosphate. Functionally, DNA-dependent RNA polymerase catalyzes the transcription of DNA into RNA using the four ribonucleoside triphosphates as substrates. In Fusobacterium nucleatum subsp. nucleatum (strain ATCC 25586 / DSM 15643 / BCRC 10681 / CIP 101130 / JCM 8532 / KCTC 2640 / LMG 13131 / VPI 4355), this protein is DNA-directed RNA polymerase subunit alpha.